The sequence spans 573 residues: MLTRNPKTKSSLQILQDSVKWHHMAHKVNSLLDAYSGLLSNESMILAVNSSFVDPLLQFESQLKIIESSFGMLVVMPSLDKVKEMGSSYEYIEDMENLYHNILNIYENILTSLVSKDLYKLQILKEMLVWMSKDSSYLQERIMVIINKVLRFTVTKVRKYISVDAPCLGLLAAELSLLCSHEDPSIVKQASLGMCHLLYIARCQNDIGTNKPTNGKSHSLQFPSSDVEFLPKEFQQDESKIAQRVGQTLLPPLLTDFVQSLLMKLSSPDDKIASDAASILIFTLEFHAEKVTMVSKIVDAIYRQLCDNNCMKDVMLQVITLLTCTSPKKVIFQLMDYPVPADDTLIQMWKAACSQASVAPHVLKTILLILKGKPGEMEDTVTEGKRFSLDITNLMPLAACQALCTFLPLGSYRKAVAQYFPQLLTTLMFQVFYNSELKPILKDRALYAQDALRVLLNCSGLQQVDITLMKENFWDQLSEDLCYYHGVCFIAKTLSEYNFPQFPETLSYLYKLSVEGPRRSEDTVIVLIFLTEVSFVDCEQLCSHFLFLPKFKSKFQFLVSLPLNVGSYQDLRS.

HEAT repeat units follow at residues 118–155, 252–289, 292–328, 357–394, and 418–458; these read LYKLQILKEMLVWMSKDSSYLQERIMVIINKVLRFTVT, PLLTDFVQSLLMKLSSPDDKIASDAASILIFTLEFHAE, TMVSKIVDAIYRQLCDNNCMKDVMLQVITLLTCTSPK, SVAPHVLKTILLILKGKPGEMEDTVTEGKRFSLDITNL, and QYFP…LLNC.

The polypeptide is Maestro heat-like repeat-containing protein family member 9 (MROH9) (Homo sapiens (Human)).